Here is a 94-residue protein sequence, read N- to C-terminus: ATP synthase subunit c (94 aa).

The next 2 helical transmembrane spans lie at 15–35 (VSVGIILAAAGLGSALGWGLI) and 61–81 (GGLMEAFPMIVLGMSMWFIFA).

It belongs to the ATPase C chain family. In terms of assembly, F-type ATPases have 2 components, F(1) - the catalytic core - and F(0) - the membrane proton channel. F(1) has five subunits: alpha(3), beta(3), gamma(1), delta(1), epsilon(1). F(0) has three main subunits: a(1), b(2) and c(10-14). The alpha and beta chains form an alternating ring which encloses part of the gamma chain. F(1) is attached to F(0) by a central stalk formed by the gamma and epsilon chains, while a peripheral stalk is formed by the delta and b chains.

The protein resides in the cell inner membrane. Functionally, f(1)F(0) ATP synthase produces ATP from ADP in the presence of a proton or sodium gradient. F-type ATPases consist of two structural domains, F(1) containing the extramembraneous catalytic core and F(0) containing the membrane proton channel, linked together by a central stalk and a peripheral stalk. During catalysis, ATP synthesis in the catalytic domain of F(1) is coupled via a rotary mechanism of the central stalk subunits to proton translocation. Key component of the F(0) channel; it plays a direct role in translocation across the membrane. A homomeric c-ring of between 10-14 subunits forms the central stalk rotor element with the F(1) delta and epsilon subunits. This is ATP synthase subunit c from Nitrosococcus oceani (strain ATCC 19707 / BCRC 17464 / JCM 30415 / NCIMB 11848 / C-107).